The primary structure comprises 296 residues: 2-methylisocitrate lyase (296 aa).

45–47 serves as a coordination point for substrate; sequence SGG. Residues Asp-85 and Asp-87 each contribute to the Mg(2+) site. Residues 123-124, Arg-158, Glu-188, 210-212, Arg-241, and Arg-270 each bind substrate; these read CG and NIT.

It belongs to the isocitrate lyase/PEP mutase superfamily. Methylisocitrate lyase family. Homotetramer; dimer of dimers. It depends on Mg(2+) as a cofactor.

It catalyses the reaction (2S,3R)-3-hydroxybutane-1,2,3-tricarboxylate = pyruvate + succinate. Its pathway is organic acid metabolism; propanoate degradation. Functionally, involved in the catabolism of short chain fatty acids (SCFA) via the 2-methylcitrate cycle I (propionate degradation route). Catalyzes the thermodynamically favored C-C bond cleavage of (2R,3S)-2-methylisocitrate to yield pyruvate and succinate via an alpha-carboxy-carbanion intermediate. This is 2-methylisocitrate lyase from Escherichia coli (strain K12).